The chain runs to 304 residues: Release factor glutamine methyltransferase (304 aa).

S-adenosyl-L-methionine contacts are provided by D144 and N188. Residue N188–Y191 coordinates substrate.

It belongs to the protein N5-glutamine methyltransferase family. PrmC subfamily.

The enzyme catalyses L-glutaminyl-[peptide chain release factor] + S-adenosyl-L-methionine = N(5)-methyl-L-glutaminyl-[peptide chain release factor] + S-adenosyl-L-homocysteine + H(+). Functionally, methylates the class 1 translation termination release factors RF1/PrfA and RF2/PrfB on the glutamine residue of the universally conserved GGQ motif. This chain is Release factor glutamine methyltransferase, found in Mycobacterium tuberculosis (strain CDC 1551 / Oshkosh).